The following is a 3038-amino-acid chain: MAQSMYPNEPIVVVGSGCRFPGDANTPSKLWELLQHPRDVQSRIPKERFDVDTFYHPDGKHHGRTNAPYAYVLQDDLGAFDAAFFNIQAGEAESMDPQHRLLLETVYEAVTNAGMRIQDLQGTSTAVYVGVMTHDYETVSTRDLENIPTYSATGVAVSVASNRISYFFDWHGPSMTIDTACSSSLVAVHLAVQQLRTGQSSMAIAAGANLILGPMTFVLESKLSMLSPSGRSRMWDAGADGYARGEAVCSVVLKTLSQALRDGDTIECVIRETGVNQDGRTTGITMPNHSAQEALIKATYAQAGLDITKAEDRCQFFEAHGTGTPAGDPQEAEAIATAFFGHEQVARSDGNERAPLFVGSAKTVVGHTEGTAGLAGLMKASFAVRHGVIPPNLLFDKISPRVAPFYKNLRIPTEATQWPALPPGQPRRASVNSFGFGGTNAHAIIEEYMEPEQNQLRVSNNEDCPPMTGVLSLPLVLSAKSQRSLKIMMEEMLQFLETHPEIHLHDLTWSLLRKRSVLPFRRAIVGHSHETIRRALEDAIEDGIVSSDFTTEVRGQPSVLGIFTGQGAQWPGMLKNLIEASPYVRSIVRELDDSLQSLPEKYRPSWTLLDQFMLEGEASNVQYASFSQPLCCAVQIVLVRLLEAARIRFTAVVGHSSGEIACAFAAGLISASVAIRIAYLRGVVSAGGARGTPGAMLAAGMSFEEAQEICELDAFEGRICVAASNSPDSVTFSGDANAIDHLKSMLEDESTFARLLRVDTAYHSHHMLPCADPYMQALEECGCAVADAGSPAGSVPWYSSVNAENRQMAARDVTAEYWKDNLVSPVLFSHAVQRAVVTHKALDIGIEVGCHPALKSPCVATIKDVLSGVDLAYTGCLERGKNDLDTFSRALAYLWERFGASSFDADEFMRAVAPDRPCMSVSKLLPAYPWDHSRRYWVESRATRHHLRGPKPHLLLGKLSEYSTPLSFQWLNFVRPRDIEWLDGHALQGQTVFPAAGYIVMAMEAALMIAGTHAKQVQLLEILDMSIDKAVIFDDEDSLVELNLTADVSRNAGEAGSMTISFKIDSCLSKEGNLSLSAKGQLALMIGDVNSRTTSASDQHHLPPPEEEHPHMNRVNIKAFYHELGLMGYNYSKDFRRLHNMQRADLRASGTIDFIPLMDEGNGCPLLLHPASLDVAFQTVIGAYSSPGDRRLRCLYVPTHVDRITLVPSLCLATAESGCEKVAFNTINTYDKGDYLSGDIAVFDAEQTTLFQVENITFKPFSPPDASTDHAMFARWSWGPLTPDSLLDNPEYWATAQDKEAIPIIERIVYFYIRSFLNQLTLEERQKAAFHLQKQIEWLEQVLASAKEGRHLWYDPGWENDTEAQIEHLCTANSYHPHVRLVQRVGQHLLPTVRSNGNPFDLLDHDGLLTEFYTNTLSFGPALHYARELVAQIAHRYQSMDILEIGAGTGGATKYVLATPQLGFNSYTYTDISTGFFEQAREQFAPFEDRMVFEPLDIRRSPAEQGFETHAYDLIIASNVLHATPDLEKTMAHARSLLKPGGQMVILEITHKEHTRLGFIFGLFADWWAGVDDGRCTEPFVSFDRWDAILKRVGFSGVDSRTTDRDANLFPTSVFSTHAIDATVEYLDAPLASSGTVKDSYPPLVVVGGQTPKSQRLLNDIKAIMPPRPLQTYKRLVDLLDAEELPMKSTFVMLTELDEELFAGLTEETFEATKLLLTYSSNTVWLTENAWVQHPHQASTIGMLRSIRREHPDLGVHVLDVDAVETFDATFLVEQVLRLEEHTDELASSTTWTQEPEVSWCKGRPWIPRLKRDLARNNRMNSSRRPIYEMIDSSRAPVALQTAPDSSSYFLESAETWFVPESVRQMETKTVYVHFSCPHALRVGQLGFFYLVQGHVQEGNREVPVVALAERNASIVHVRPDYIYTEADNNLSEGGGSLIVTVLAAAVLAETVISTAKSLGVTDSILVLNPPSICGQMLLHAGEEIGLQVHLATTSGNRSSVSAGDAKSWLTLHARDTDWHLRRVLPRGVQAFVDLSADQSCECLTQRMMKVLMPGCAHYRAADLFTDTVSTELHRGLRHQASLPAAYWEHVVSLARQGLSSVSEGWEVMPCTQFAAHADKTRPDLSTVISWPRESDKATLPTRVRSIDAETLFAADKTYLLVGLTGDLGRSLGRWMVQHGACHIVLTSRNPQVNPKWLAHVEELGGRVTVLSMDVTSENSVDAGLAKIKDLHLPPVGGIAFGPLVLQDVMLKNMELPMMEMVLNPKVEGVRILHEKFSDPTSSNPLDFFVMFSSIVAVMGNPGQANYSAANCYLQALAQQRVASGLAASTIDIGAVYGVGFVTRAELEEDFNAIRFMFDSVEEHELHTLFAEAVVAGRRAVHQQEQQRKFATVLDMADLELTTGIPPLDPALKDRITFFDDPRIGNLKIPEYRGAKAGEGAAGSKGSVKEQLLQATNLDQVRQIVIDGLSAKLQVTLQIPDGESVHPTISLIDQGVDSLGAVTVGTWFSKQLYLDLPLLKVLGGASIADLADEAAARLPPSSIPLVAATDGGAESTDNTSENEVSGREDTDLSAAATITEPSSADEDDTEPGDEDVPRSHHPLSLGQEYSWRIQQGAEDPTVFNNTIGMFMKGPIDLKRLYKALRAVLRRHEIFRTGFANVDENGMAQLVFGQTKNKVQTIQVSDRAGAEEGYRQLVQTRYNPAAGDTLRLVDFFWGQDDHLLVVAYHRLVGDGSTTENIFVEAGQLYDGRSLSPRVPQFADLAARQRAMLEDGRMEEDLAYWKEMHQRPSSIPVLPLMRPLVGNSSTSNTPNFQHCGSWQQHEAVARLDPMVAFRIKERSRKHKATPMQFYLAAYQVLLARLTDSTDLTVGLADTNRATVDEMAAMGFFANLLPLRFRDFRPHITFGEHLIATRDLVREALQHARVPYGVLLDQLGLEVPVPTSNQPAPLLQAVFDYKQGQAESGTIGGAKITEVIATRERTPYDVVLEMSDDPTKDPLLTAKLQSSRYEAHHPQAFLESYMSLLSMFSMNPALKLA.

A Ketosynthase family 3 (KS3) domain is found at 8 to 447; sequence NEPIVVVGSG…GTNAHAIIEE (440 aa). Catalysis depends on for beta-ketoacyl synthase activity residues C181, H320, and H367. The interval 562–889 is malonyl-CoA:ACP transacylase (MAT) domain; sequence IFTGQGAQWP…GKNDLDTFSR (328 aa). S656 (for malonyltransferase activity) is an active-site residue. The interval 695-757 is lovC-binding; that stretch reads AMLAAGMSFE…DESTFARLLR (63 aa). The tract at residues 953-1089 is N-terminal hotdog fold; that stretch reads HLLLGKLSEY…GQLALMIGDV (137 aa). A dehydratase (DH) domain region spans residues 953–1263; that stretch reads HLLLGKLSEY…ENITFKPFSP (311 aa). The PKS/mFAS DH domain maps to 953–1267; it reads HLLLGKLSEY…FKPFSPPDAS (315 aa). H985 acts as the Proton acceptor; for dehydratase activity in catalysis. The tract at residues 1107–1267 is C-terminal hotdog fold; sequence EEHPHMNRVN…FKPFSPPDAS (161 aa). D1174 (proton donor; for dehydratase activity) is an active-site residue. A methyltransferase (CMet) domain region spans residues 1443–1543; sequence LEIGAGTGGA…ARSLLKPGGQ (101 aa). The segment at 2139-2437 is ketoreductase (KR) domain; that stretch reads TLPTRVRSID…KIPEYRGAKA (299 aa). In terms of domain architecture, Carrier spans 2463-2538; it reads QIVIDGLSAK…DLADEAAARL (76 aa). The residue at position 2498 (S2498) is an O-(pantetheine 4'-phosphoryl)serine. The interval 2546–2602 is disordered; that stretch reads VAATDGGAESTDNTSENEVSGREDTDLSAAATITEPSSADEDDTEPGDEDVPRSHHP. Residues 2583–2594 are compositionally biased toward acidic residues; it reads SADEDDTEPGDE. Residues 2602–2952 are inactive Condensation domain; that stretch reads PLSLGQEYSW…PTSNQPAPLL (351 aa).

In terms of assembly, homodimer. Each MAT domain from the lovB homodimer binds one lovC molecule to form the final active lovB-lovC megasynthase complex. It depends on pantetheine 4'-phosphate as a cofactor.

It catalyses the reaction holo-[lovastatin nonaketide synthase] + 9 malonyl-CoA + S-adenosyl-L-methionine + 11 NADPH + 19 H(+) = dihydromonacolin L-[lovastatin nonaketide synthase] + S-adenosyl-L-homocysteine + 9 CO2 + 11 NADP(+) + 9 CoA + 6 H2O. It participates in polyketide biosynthesis; lovastatin biosynthesis. Its function is as follows. Lovastatin nonaketide synthase; part of the gene cluster that mediates the biosynthesis of lovastatin (also known as mevinolin, mevacor or monacolin K), a hypolipidemic inhibitor of (3S)-hydroxymethylglutaryl-coenzyme A (HMG-CoA) reductase (HMGR). The first step in the biosynthesis of lovastatin is the production of dihydromonacolin L acid by the lovastatin nonaketide synthase lovB and the trans-acting enoyl reductase lovC (called the lovB-lovC megasynthase complex) via condensation of one acetyl-CoA unit and 8 malonyl-CoA units. Dihydromonacolin L acid is released from lovB by the thioesterase lovG. Next, dihydromonacolin L acid is oxidized by the dihydromonacolin L monooxygenase lovA twice to form monacolin J acid. The 2-methylbutyrate moiety of lovastatin is synthesized by the lovastatin diketide synthase lovF via condensation of one acetyl-CoA unit and one malonyl-CoA unit. Finally, the covalent attachment of this moiety to monacolin J acid is catalyzed by the transesterase lovD to yield lovastatin. LovD has broad substrate specificity and can also convert monacolin J to simvastatin using alpha-dimethylbutanoyl-S-methyl-3-mercaptopropionate (DMB-S-MMP) as the thioester acyl donor, and can also catalyze the reverse reaction and function as hydrolase in vitro. LovD has much higher activity with LovF-bound 2-methylbutanoate than with free diketide substrates. The sequence is that of Lovastatin nonaketide synthase, polyketide synthase component (lovB) from Aspergillus terreus (strain NIH 2624 / FGSC A1156).